A 541-amino-acid chain; its full sequence is Phosphoenolpyruvate carboxykinase (ATP) (541 aa).

Substrate is bound by residues Arg64, Tyr206, and Lys212. Residues Lys212, His231, and Gly247–Thr255 each bind ATP. Positions 212 and 231 each coordinate Mn(2+). Asp268 serves as a coordination point for Mn(2+). Residues Glu296, Arg332, and Thr454 each coordinate ATP. Position 332 (Arg332) interacts with substrate.

The protein belongs to the phosphoenolpyruvate carboxykinase (ATP) family. In terms of assembly, monomer. Requires Mn(2+) as cofactor.

The protein localises to the cytoplasm. It catalyses the reaction oxaloacetate + ATP = phosphoenolpyruvate + ADP + CO2. The protein operates within carbohydrate biosynthesis; gluconeogenesis. Involved in the gluconeogenesis. Catalyzes the conversion of oxaloacetate (OAA) to phosphoenolpyruvate (PEP) through direct phosphoryl transfer between the nucleoside triphosphate and OAA. The chain is Phosphoenolpyruvate carboxykinase (ATP) from Wigglesworthia glossinidia brevipalpis.